Consider the following 250-residue polypeptide: Malonyl-[acyl-carrier protein] O-methyltransferase (250 aa).

Belongs to the methyltransferase superfamily.

It catalyses the reaction malonyl-[ACP] + S-adenosyl-L-methionine = malonyl-[ACP] methyl ester + S-adenosyl-L-homocysteine. It functions in the pathway cofactor biosynthesis; biotin biosynthesis. Its function is as follows. Converts the free carboxyl group of a malonyl-thioester to its methyl ester by transfer of a methyl group from S-adenosyl-L-methionine (SAM). It allows to synthesize pimeloyl-ACP via the fatty acid synthetic pathway. This Neorickettsia risticii (strain Illinois) protein is Malonyl-[acyl-carrier protein] O-methyltransferase.